A 142-amino-acid polypeptide reads, in one-letter code: Translation initiation factor 2 subunit beta (142 aa).

The protein belongs to the eIF-2-beta/eIF-5 family. As to quaternary structure, heterotrimer composed of an alpha, a beta and a gamma chain.

Functionally, eIF-2 functions in the early steps of protein synthesis by forming a ternary complex with GTP and initiator tRNA. This is Translation initiation factor 2 subunit beta from Thermococcus gammatolerans (strain DSM 15229 / JCM 11827 / EJ3).